Consider the following 415-residue polypeptide: Histone acetyltransferase type B subunit 2 (415 aa).

WD repeat units lie at residues 118-158 (ENNF…KTAI), 163-203 (PHED…ATDL), 211-251 (THKD…EPVS), 256-296 (PESE…TKSA), and 307-347 (GHSD…EEQA). An interaction with the histone H4 N-terminus region spans residues 349-353 (EDAED). One copy of the WD 6 repeat lies at 364–404 (GHTGAVTDLSWCPYKDWTIGSVADDNIVHLWEIGKTLLNAE).

The protein belongs to the WD repeat RBAP46/RBAP48/MSI1 family. As to quaternary structure, component of the HAT-B complex composed of at least HAT1 and HAT2. The HAT-B complex binds to histone H4 tail.

It is found in the cytoplasm. The protein localises to the nucleus. Functionally, regulatory subunit of the histone acetylase B (HAT-B) complex. The complex acetylates 'Lys-12' of histone H4 which is required for telomeric silencing. The protein is Histone acetyltransferase type B subunit 2 (HAT2) of Debaryomyces hansenii (strain ATCC 36239 / CBS 767 / BCRC 21394 / JCM 1990 / NBRC 0083 / IGC 2968) (Yeast).